The primary structure comprises 309 residues: MDILTAPVLIGVSIVVITVLYLFLKPAGSNSTPPKPQNKIPKALQDPSVKYPLPLIEKEEINHDTKRFRFGLPSSSHVLGLPIGQHIYLSAKVNGSLVVRAYTPVSSDQDQGYVDLVVKVYYKNTHPSYPDGGKMSQYLDNMKIGDTIDFRGPNGLLVYNGKGKFAIRPDKKSEAEVRKFKHVAMIAGGTGITPMLQLIRSITADSFDETVCSLIFANQTEKDILLRNELDEVHRNHPSKLKLWYTLDRPSEGWKYSEGFVNAAMMKDHLPPADSDVLVVMCGPPAMIEKACLPNLLKLGYKKENIFAY.

The helical transmembrane segment at 3–23 (ILTAPVLIGVSIVVITVLYLF) threads the bilayer. The FAD-binding FR-type domain occupies 48 to 160 (SVKYPLPLIE…RGPNGLLVYN (113 aa)). FAD contacts are provided by residues 140–170 (DNMK…IRPD) and 179–214 (KFKH…VCSL).

It belongs to the flavoprotein pyridine nucleotide cytochrome reductase family. Requires FAD as cofactor.

The protein localises to the membrane. The catalysed reaction is 2 Fe(III)-[cytochrome b5] + NADH = 2 Fe(II)-[cytochrome b5] + NAD(+) + H(+). NADH-cytochrome b5 reductases are involved in desaturation and elongation of fatty acids, cholesterol biosynthesis and drug metabolism. The polypeptide is NADH-cytochrome b5 reductase 2 (cyb5r2) (Danio rerio (Zebrafish)).